Here is a 500-residue protein sequence, read N- to C-terminus: Monocarboxylate transporter 1 (500 aa).

Residues M1–V22 lie on the Cytoplasmic side of the membrane. The helical transmembrane segment at V23–F44 threads the bilayer. K38 provides a ligand contact to (S)-lactate. The Extracellular portion of the chain corresponds to K45–T55. The helical transmembrane segment at S56–V80 threads the bilayer. Over N81 to G84 the chain is Cytoplasmic. Residues S85 to F105 form a helical membrane-spanning segment. The Extracellular portion of the chain corresponds to C106–V109. The chain crosses the membrane as a helical span at residues Q110–L132. Over T133 to A146 the chain is Cytoplasmic. The helical transmembrane segment at N147–F169 threads the bilayer. At G170 to W174 the chain is on the extracellular side. The helical transmembrane segment at R175–L194 threads the bilayer. Residues M195–R261 are Cytoplasmic-facing. Phosphoserine occurs at positions 210 and 213. T231 is modified (phosphothreonine). A helical transmembrane segment spans residues G262–G288. The Extracellular segment spans residues K289–S295. The helical transmembrane segment at E296–G317 threads the bilayer. D309 is a H(+) binding site. R313 serves as a coordination point for (S)-lactate. At L318–R328 the chain is on the cytoplasmic side. The chain crosses the membrane as a helical span at residues I329–L349. The Extracellular segment spans residues S350–Y353. A helical transmembrane segment spans residues V354–F375. Topologically, residues E376–S389 are cytoplasmic. Residues A390–G410 traverse the membrane as a helical segment. Residues R411–Y421 lie on the Extracellular side of the membrane. The chain crosses the membrane as a helical span at residues T422 to I443. Residues N444–V500 lie on the Cytoplasmic side of the membrane. Basic and acidic residues predominate over residues A454 to E465. Positions A454–V500 are disordered. Phosphoserine is present on S461. T466 is subject to Phosphothreonine. A phosphoserine mark is found at S467, S483, and S498. Basic and acidic residues predominate over residues E482–V500.

Belongs to the major facilitator superfamily. Monocarboxylate porter (TC 2.A.1.13) family. Interacts with EMB; interaction mediates SLC16A1 targeting to the plasma membrane. Interacts with isoform 2 of BSG; interaction mediates SLC16A1 targeting to the plasma membrane. In terms of tissue distribution, widely expressed. Detected in heart and in blood lymphocytes and monocytes (at protein level).

The protein resides in the cell membrane. It localises to the basolateral cell membrane. Its subcellular location is the apical cell membrane. It carries out the reaction (S)-lactate(in) + H(+)(in) = (S)-lactate(out) + H(+)(out). It catalyses the reaction acetate(out) + H(+)(out) = acetate(in) + H(+)(in). The catalysed reaction is acetoacetate(out) + H(+)(out) = acetoacetate(in) + H(+)(in). The enzyme catalyses pyruvate(out) + H(+)(out) = pyruvate(in) + H(+)(in). It carries out the reaction (R)-3-hydroxybutanoate(out) + H(+)(out) = (R)-3-hydroxybutanoate(in) + H(+)(in). It catalyses the reaction 3-methyl-2-oxobutanoate(out) + H(+)(out) = 3-methyl-2-oxobutanoate(in) + H(+)(in). The catalysed reaction is 4-methyl-2-oxopentanoate(out) + H(+)(out) = 4-methyl-2-oxopentanoate(in) + H(+)(in). The enzyme catalyses succinate(in) + 2 H(+)(in) = succinate(out) + 2 H(+)(out). Its activity is regulated as follows. Selectively inhibited by AZD3965, that acts as a competitive inhibitor binding to the central channel in the outward open conformation. Functionally, bidirectional proton-coupled monocarboxylate transporter. Catalyzes the rapid transport across the plasma membrane of many monocarboxylates such as lactate, pyruvate, acetate and the ketone bodies acetoacetate and beta-hydroxybutyrate, and thus contributes to the maintenance of intracellular pH. The transport direction is determined by the proton motive force and the concentration gradient of the substrate monocarboxylate. MCT1 is a major lactate exporter. Plays a role in cellular responses to a high-fat diet by modulating the cellular levels of lactate and pyruvate that contribute to the regulation of central metabolic pathways and insulin secretion, with concomitant effects on plasma insulin levels and blood glucose homeostasis. Facilitates the protonated monocarboxylate form of succinate export, that its transient protonation upon muscle cell acidification in exercising muscle and ischemic heart. Functions via alternate outward- and inward-open conformation states. Protonation and deprotonation of 309-Asp is essential for the conformational transition. The protein is Monocarboxylate transporter 1 of Homo sapiens (Human).